Here is a 296-residue protein sequence, read N- to C-terminus: ATP synthase gamma chain (296 aa).

The protein belongs to the ATPase gamma chain family. In terms of assembly, F-type ATPases have 2 components, CF(1) - the catalytic core - and CF(0) - the membrane proton channel. CF(1) has five subunits: alpha(3), beta(3), gamma(1), delta(1), epsilon(1). CF(0) has three main subunits: a, b and c.

It is found in the cell inner membrane. Functionally, produces ATP from ADP in the presence of a proton gradient across the membrane. The gamma chain is believed to be important in regulating ATPase activity and the flow of protons through the CF(0) complex. This is ATP synthase gamma chain from Gluconobacter oxydans (strain 621H) (Gluconobacter suboxydans).